The primary structure comprises 78 residues: Omega-conotoxin-like ArMKLT1-011 (78 aa).

The first 22 residues, 1 to 22 (MKLTCMMIVAVLFLTAWTSVTA), serve as a signal peptide directing secretion. Positions 23–48 (VNTRGELENLFLRASHEMNSEASKLD) are excised as a propeptide. 3 cysteine pairs are disulfide-bonded: Cys52-Cys69, Cys59-Cys73, and Cys68-Cys77.

It belongs to the conotoxin O1 superfamily. In terms of tissue distribution, expressed by the venom duct.

It is found in the secreted. In terms of biological role, omega-conotoxins act at presynaptic membranes, they bind and block voltage-gated calcium channels (Cav). This chain is Omega-conotoxin-like ArMKLT1-011, found in Conus arenatus (Sand-dusted cone).